The sequence spans 130 residues: MYSAMTRSINILVEPTYLEDQSEPDQDYYVWAYHVTIENKGPETVRLRARYWKITDATGHVHEVRGPGVVGEQPLLRPGEKFEYTSGTPLGAPSGIMFGNYEMETAEGEKFEVDIPAFSLDSPHAKRMLH.

The 125-residue stretch at 3 to 127 folds into the ApaG domain; it reads SAMTRSINIL…FSLDSPHAKR (125 aa).

This is Protein ApaG from Parvibaculum lavamentivorans (strain DS-1 / DSM 13023 / NCIMB 13966).